A 64-amino-acid polypeptide reads, in one-letter code: Disintegrin CV-11-beta (64 aa).

Residues 1–64 (NSAHPCCDPV…SDCPRNPWKD (64 aa)) enclose the Disintegrin domain. Disulfide bonds link Cys6/Cys29, Cys20/Cys26, Cys25/Cys50, and Cys38/Cys57. Positions 42-44 (RGD) match the Cell attachment site motif.

The protein belongs to the disintegrin family. Dimeric disintegrin subfamily. As to quaternary structure, heterodimer with subunit alpha; disulfide-linked. In terms of tissue distribution, expressed by the venom gland.

It is found in the secreted. Its function is as follows. Inhibits ADP-induced human platelet aggregation. Antagonist of alpha-IIb/beta-3 (ITGA2B/ITGB3). This Cerastes vipera (Sahara sand viper) protein is Disintegrin CV-11-beta.